Consider the following 314-residue polypeptide: Cyclic di-GMP binding protein TDE_0214 (314 aa).

The PilZ domain maps to 146 to 234; it reads QKRRNERVVI…KTVRTEPVEG (89 aa). Residues 288–300 are compositionally biased toward polar residues; sequence TPVSSPIGTNTAP. A disordered region spans residues 288–314; that stretch reads TPVSSPIGTNTAPLTPPPADSAPEQIS.

In terms of biological role, cyclic-di-GMP binding protein that plays important roles in motility, chemotaxis, biofilm formation and virulence. In Treponema denticola (strain ATCC 35405 / DSM 14222 / CIP 103919 / JCM 8153 / KCTC 15104), this protein is Cyclic di-GMP binding protein TDE_0214.